A 349-amino-acid chain; its full sequence is Ureidoglycolate dehydrogenase (NAD(+)) (349 aa).

The Proton acceptor role is filled by His116. Residues Ser140, 174 to 176 (DMA), Lys224, and 306 to 308 (GQD) contribute to the NAD(+) site.

The protein belongs to the LDH2/MDH2 oxidoreductase family. As to quaternary structure, homodimer.

It is found in the cytoplasm. It catalyses the reaction (S)-ureidoglycolate + NAD(+) = N-carbamoyl-2-oxoglycine + NADH + H(+). It participates in nitrogen metabolism; (S)-allantoin degradation; oxalurate from (S)-ureidoglycolate: step 1/1. In terms of biological role, allD plays a pivotal role as a metabolic branch-point enzyme in nitrogen utilization via the assimilation of allantoin. It is able to utilize allantoin as a sole source of nitrogen under anaerobic conditions. Catalyzes the oxidation of ureidoglycolate to oxalurate. This is Ureidoglycolate dehydrogenase (NAD(+)) from Escherichia coli O157:H7.